Reading from the N-terminus, the 393-residue chain is MLRFQTAGESHGEALVATLTGVPAGLPIDQAFLDRELWRRQQGFGRGGRMKIERDTAHILSGVHHGKTIGSPIAILIRNNDWKNWQESLPVEEGDSAKHKPVKSPRPGHADLAGALKYNFPEARYVLERASARETTARVAAGAIAKLLLRQIGADVLSHVIAVGTARLENTEVQWEKLVELAQRDNVLLGCVDPEAEQRMKEQVDQVLRTGDTVGGVFEVVAHNLPPGLGTYVEWDRRLDGLLAMAVMSLQAVKAVEIGEGVSVAATFGSGAQDEIGYEREHESKFTGFTRTSNHAGGIEGGVSNGQDILVRGYLKPISTLRRPLGSVDFATREPLKAAYERSDVCVVPAAGIAAEAMVAITLAGCALEKFGGDSLVEFKRNYEGYCQQLQSF.

Positions 40 and 46 each coordinate NADP(+). Residues 129 to 131 (RAS), 251 to 252 (QA), Gly301, 316 to 320 (KPIST), and Arg342 contribute to the FMN site.

Belongs to the chorismate synthase family. Homotetramer. It depends on FMNH2 as a cofactor.

The catalysed reaction is 5-O-(1-carboxyvinyl)-3-phosphoshikimate = chorismate + phosphate. It functions in the pathway metabolic intermediate biosynthesis; chorismate biosynthesis; chorismate from D-erythrose 4-phosphate and phosphoenolpyruvate: step 7/7. Its function is as follows. Catalyzes the anti-1,4-elimination of the C-3 phosphate and the C-6 proR hydrogen from 5-enolpyruvylshikimate-3-phosphate (EPSP) to yield chorismate, which is the branch point compound that serves as the starting substrate for the three terminal pathways of aromatic amino acid biosynthesis. This reaction introduces a second double bond into the aromatic ring system. This Koribacter versatilis (strain Ellin345) protein is Chorismate synthase.